Here is a 354-residue protein sequence, read N- to C-terminus: NAD-dependent epimerase/dehydratase ALT6 (354 aa).

NADP(+) contacts are provided by Lys41 and Tyr174.

The protein belongs to the NAD(P)-dependent epimerase/dehydratase family. Dihydroflavonol-4-reductase subfamily.

It functions in the pathway mycotoxin biosynthesis. NAD-dependent epimerase/dehydratase; part of the gene cluster that mediates the biosynthesis of the host-selective toxins (HSTs) AAL-toxins, sphinganine-analog mycotoxins responsible for Alternaria stem canker on tomato by the tomato pathotype. The biosynthesis starts with the polyketide synthase ALT1-catalyzed C-16 carbon chain assembly from one starter acetyl-CoA unit with malonyl-CoA extender units. ALT1 also selectively transfers methyl groups at the first and the third cycle of chain elongation for AAL toxin. The C-16 polyketide chain is released from the enzyme by a nucleophilic attack of a carbanion, which is derived from R-carbon of glycin by decarboxylation, on the carbonyl carbon of polyketide acyl chain. This step is probably catalyzed by a pyridoxal 5'-phosphate-dependent aminoacyl transferase ALT4. The respective functions of the other enzymes encoded by the cluster have still to be elucidated. The sphingosine N-acyltransferase-like protein ALT7 seems not to act as a resistance/self-tolerance factor against the toxin in the toxin biosynthetic gene cluster, contrary to what is expected. The chain is NAD-dependent epimerase/dehydratase ALT6 from Alternaria alternata (Alternaria rot fungus).